Here is a 349-residue protein sequence, read N- to C-terminus: MTPYSLLRPLIFRIPAEPAHRLTIKALGLAQGGTTLAPTPSLAQRIAGLAFPNPVGMAPGFDKNAEVPDAMLGLGFGFVEVGTVTPRPQEGNPKPRLFRLVEDRAVINRMGFNNEGAQAVTNRLVRRRETGKHGLPGIVGVNIGANKDSADRIADYALMTRLMAPLASYLTVNISSPNTPGLRALQDEGALAALLDAVIEARGNMTTPVFLKLAPDLEPADIDSICRIAIEKQLAALIISNTTITRPVLRSAHAGEAGGLSGAPLRELALQRLRDFRKASGGAIPLVGVGGIATVDDAWERIRAGASLIQIYSAMVYEGPGLARRLVAGLERKVREAGLTSIAEAVGSE.

FMN-binding positions include proline 59–lysine 63 and threonine 83. Lysine 63 provides a ligand contact to substrate. Position 108 to 112 (asparagine 108 to phenylalanine 112) interacts with substrate. Positions 142 and 173 each coordinate FMN. Asparagine 173 contacts substrate. Serine 176 functions as the Nucleophile in the catalytic mechanism. A substrate-binding site is contributed by asparagine 178. FMN-binding residues include lysine 212 and serine 240. Residue asparagine 241 to threonine 242 participates in substrate binding. FMN contacts are provided by residues glycine 262, glycine 291, and tyrosine 312–serine 313.

This sequence belongs to the dihydroorotate dehydrogenase family. Type 2 subfamily. In terms of assembly, monomer. It depends on FMN as a cofactor.

It localises to the cell membrane. The enzyme catalyses (S)-dihydroorotate + a quinone = orotate + a quinol. Its pathway is pyrimidine metabolism; UMP biosynthesis via de novo pathway; orotate from (S)-dihydroorotate (quinone route): step 1/1. Catalyzes the conversion of dihydroorotate to orotate with quinone as electron acceptor. The chain is Dihydroorotate dehydrogenase (quinone) from Novosphingobium aromaticivorans (strain ATCC 700278 / DSM 12444 / CCUG 56034 / CIP 105152 / NBRC 16084 / F199).